The sequence spans 72 residues: ATP synthase protein 8 (72 aa).

Residues tryptophan 16 to valine 36 traverse the membrane as a helical segment.

This sequence belongs to the ATPase protein 8 family. F-type ATPases have 2 components, CF(1) - the catalytic core - and CF(0) - the membrane proton channel.

Its subcellular location is the mitochondrion membrane. Its function is as follows. Mitochondrial membrane ATP synthase (F(1)F(0) ATP synthase or Complex V) produces ATP from ADP in the presence of a proton gradient across the membrane which is generated by electron transport complexes of the respiratory chain. F-type ATPases consist of two structural domains, F(1) - containing the extramembraneous catalytic core and F(0) - containing the membrane proton channel, linked together by a central stalk and a peripheral stalk. During catalysis, ATP synthesis in the catalytic domain of F(1) is coupled via a rotary mechanism of the central stalk subunits to proton translocation. Part of the complex F(0) domain. Minor subunit located with subunit a in the membrane. The protein is ATP synthase protein 8 (MTATP8) of Metridium senile (Brown sea anemone).